The chain runs to 462 residues: Probable Xaa-Pro aminopeptidase NECHADRAFT_60613 (462 aa).

4 residues coordinate Mn(2+): D259, D270, E393, and E433.

This sequence belongs to the peptidase M24B family. It depends on Mn(2+) as a cofactor.

It catalyses the reaction Release of any N-terminal amino acid, including proline, that is linked to proline, even from a dipeptide or tripeptide.. In terms of biological role, catalyzes the removal of a penultimate prolyl residue from the N-termini of peptides. This Fusarium vanettenii (strain ATCC MYA-4622 / CBS 123669 / FGSC 9596 / NRRL 45880 / 77-13-4) (Fusarium solani subsp. pisi) protein is Probable Xaa-Pro aminopeptidase NECHADRAFT_60613.